A 251-amino-acid chain; its full sequence is Tungstate/molybdate/chromate-binding protein ModA (251 aa).

Positions 1–23 (MTTRLPQLLLALLASAVSLAASA) are cleaved as a signal peptide. Molybdate contacts are provided by T60 and I168.

It belongs to the bacterial solute-binding protein ModA family. The complex is composed of two ATP-binding proteins (ModC), two transmembrane proteins (ModB) and a solute-binding protein (ModA).

The protein resides in the periplasm. Its function is as follows. Part of the ABC transporter complex ModABC involved in the transport of molybdenum into the cell. Binds tungstate and molybdate. Can also bind chromate, with lower affinity. Plays an essential role in recruitment of molybdate for nitrate reduction. The chain is Tungstate/molybdate/chromate-binding protein ModA from Pseudomonas aeruginosa (strain ATCC 15692 / DSM 22644 / CIP 104116 / JCM 14847 / LMG 12228 / 1C / PRS 101 / PAO1).